Consider the following 405-residue polypeptide: Na(+)-translocating NADH-quinone reductase subunit F (405 aa).

A helical membrane pass occupies residues isoleucine 3–phenylalanine 23. A 2Fe-2S ferredoxin-type domain is found at glycine 32–valine 124. Positions 67, 73, 76, and 108 each coordinate [2Fe-2S] cluster. The 141-residue stretch at valine 127 to lysine 267 folds into the FAD-binding FR-type domain. Residues aspartate 270–methionine 387 form a catalytic region.

It belongs to the NqrF family. As to quaternary structure, composed of six subunits; NqrA, NqrB, NqrC, NqrD, NqrE and NqrF. [2Fe-2S] cluster serves as cofactor. It depends on FAD as a cofactor.

Its subcellular location is the cell inner membrane. The catalysed reaction is a ubiquinone + n Na(+)(in) + NADH + H(+) = a ubiquinol + n Na(+)(out) + NAD(+). Its function is as follows. NQR complex catalyzes the reduction of ubiquinone-1 to ubiquinol by two successive reactions, coupled with the transport of Na(+) ions from the cytoplasm to the periplasm. The first step is catalyzed by NqrF, which accepts electrons from NADH and reduces ubiquinone-1 to ubisemiquinone by a one-electron transfer pathway. The chain is Na(+)-translocating NADH-quinone reductase subunit F from Neisseria meningitidis serogroup B (strain ATCC BAA-335 / MC58).